The sequence spans 335 residues: Flagellar P-ring protein (335 aa).

The first 17 residues, 1–17, serve as a signal peptide directing secretion; it reads MNKPMLMLITFATSLLA.

This sequence belongs to the FlgI family. In terms of assembly, the basal body constitutes a major portion of the flagellar organelle and consists of four rings (L,P,S, and M) mounted on a central rod.

It localises to the periplasm. The protein resides in the bacterial flagellum basal body. Assembles around the rod to form the L-ring and probably protects the motor/basal body from shearing forces during rotation. The polypeptide is Flagellar P-ring protein (Borreliella burgdorferi (strain ZS7) (Borrelia burgdorferi)).